The following is an 826-amino-acid chain: Eukaryotic translation initiation factor 3 subunit C (826 aa).

Disordered regions lie at residues 1 to 71 (MSRF…GKGA) and 205 to 227 (SGGDVAEEEEEENKEDKPKPRAK). Acidic residues predominate over residues 10–20 (DSDDSSSDEDL). A compositionally biased stretch (low complexity) spans 21-30 (YGSGSESGSD). Residues 32 to 65 (SQDEQDGGDDNDDDMSDDSMFADDSDDDSDDDED) are compositionally biased toward acidic residues. A compositionally biased stretch (basic and acidic residues) spans 218–227 (KEDKPKPRAK). The PCI domain occupies 605 to 779 (FHTHINLELL…NSVVFTQAVQ (175 aa)).

Belongs to the eIF-3 subunit C family. As to quaternary structure, component of the eukaryotic translation initiation factor 3 (eIF-3) complex.

Its subcellular location is the cytoplasm. Component of the eukaryotic translation initiation factor 3 (eIF-3) complex, which is involved in protein synthesis of a specialized repertoire of mRNAs and, together with other initiation factors, stimulates binding of mRNA and methionyl-tRNAi to the 40S ribosome. The eIF-3 complex specifically targets and initiates translation of a subset of mRNAs involved in cell proliferation. The protein is Eukaryotic translation initiation factor 3 subunit C of Yarrowia lipolytica (strain CLIB 122 / E 150) (Yeast).